Here is a 226-residue protein sequence, read N- to C-terminus: MTTQVPPHSVQVHTTTTHRYEAGVVPPGARFETSYEAGVKAASIYHSERGPTTSQVLAVLAGLPVGGILLLLAGLTLAGTLTGLAVATPLFVLFSPVLVPATVAIGLAVAGFLTSGAFGLTALSSFSWILNYIRETQPASENLAAAAKHHLAEAAEYVGQKTKEVGQKTKEVGQDIQSKAQDTREAAARDAREAAARDAREAAARDAKVEARDVKRTTVTATTATA.

The interval 1–76 (MTTQVPPHSV…GILLLLAGLT (76 aa)) is polar. Helical transmembrane passes span 56–76 (VLAVLAGLPVGGILLLLAGLT), 90–110 (LFVLFSPVLVPATVAIGLAVA), and 111–131 (GFLTSGAFGLTALSSFSWILN). The tract at residues 77-130 (LAGTLTGLAVATPLFVLFSPVLVPATVAIGLAVAGFLTSGAFGLTALSSFSWIL) is hydrophobic. Tandem repeats lie at residues 159–165 (GQKTKEV), 166–173 (GQKTKEVG), 184–191 (REAAARDA), 192–199 (REAAARDA), and 200–207 (REAAARDA). Positions 159 to 173 (GQKTKEVGQKTKEVG) are 2 X 7 AA tandem repeats. Composition is skewed to basic and acidic residues over residues 164–173 (EVGQKTKEVG) and 181–216 (QDTREAAARDAREAAARDAREAAARDAKVEARDVKR). The interval 164 to 226 (EVGQKTKEVG…TTVTATTATA (63 aa)) is disordered. Residues 184 to 207 (REAAARDAREAAARDAREAAARDA) are 3 X 8 AA tandem repeats. Positions 217–226 (TTVTATTATA) are enriched in low complexity.

This sequence belongs to the oleosin family.

Its subcellular location is the lipid droplet. It localises to the membrane. Its function is as follows. May have a structural role to stabilize the lipid body during desiccation of the seed by preventing coalescence of the oil. Probably interacts with both lipid and phospholipid moieties of lipid bodies. May also provide recognition signals for specific lipase anchorage in lipolysis during seedling growth. In Glycine max (Soybean), this protein is P24 oleosin isoform A.